The sequence spans 290 residues: Cbb3-type cytochrome c oxidase subunit FixP (290 aa).

The Cytoplasmic segment spans residues 1 to 32; sequence MTDHSEFDSVSGKTTTGHEWDGIKELNTPLPR. The chain crosses the membrane as a helical span at residues 33–53; it reads WWVICFYLTIVWAIGYWIVYP. The Periplasmic portion of the chain corresponds to 54–290; sequence AWPLISSNTT…VYVHSLGGGK (237 aa). 2 consecutive Cytochrome c domains span residues 109-198 and 206-287; these read LARA…RSLS and YDAA…HSLG. Residues Cys-122, Cys-125, His-126, Met-173, Cys-219, Cys-222, His-223, and Met-264 each contribute to the heme c site.

This sequence belongs to the CcoP / FixP family. Component of the cbb3-type cytochrome c oxidase at least composed of FixN, FixO, FixQ and FixP. It depends on heme c as a cofactor.

It localises to the cell inner membrane. It functions in the pathway energy metabolism; oxidative phosphorylation. In terms of biological role, C-type cytochrome. Part of the cbb3-type cytochrome c oxidase complex. FixP subunit is required for transferring electrons from donor cytochrome c via its heme groups to FixO subunit. From there, electrons are shuttled to the catalytic binuclear center of FixN subunit where oxygen reduction takes place. The complex also functions as a proton pump. The chain is Cbb3-type cytochrome c oxidase subunit FixP from Bradyrhizobium diazoefficiens (strain JCM 10833 / BCRC 13528 / IAM 13628 / NBRC 14792 / USDA 110).